Reading from the N-terminus, the 257-residue chain is Thiazole synthase (257 aa).

The active-site Schiff-base intermediate with DXP is K98. 1-deoxy-D-xylulose 5-phosphate is bound by residues G159, 185 to 186 (AG), and 207 to 208 (NT).

Belongs to the ThiG family. In terms of assembly, homotetramer. Forms heterodimers with either ThiH or ThiS.

Its subcellular location is the cytoplasm. The enzyme catalyses [ThiS sulfur-carrier protein]-C-terminal-Gly-aminoethanethioate + 2-iminoacetate + 1-deoxy-D-xylulose 5-phosphate = [ThiS sulfur-carrier protein]-C-terminal Gly-Gly + 2-[(2R,5Z)-2-carboxy-4-methylthiazol-5(2H)-ylidene]ethyl phosphate + 2 H2O + H(+). The protein operates within cofactor biosynthesis; thiamine diphosphate biosynthesis. Functionally, catalyzes the rearrangement of 1-deoxy-D-xylulose 5-phosphate (DXP) to produce the thiazole phosphate moiety of thiamine. Sulfur is provided by the thiocarboxylate moiety of the carrier protein ThiS. In vitro, sulfur can be provided by H(2)S. This is Thiazole synthase from Anaeromyxobacter sp. (strain Fw109-5).